The primary structure comprises 460 residues: Tyrosine phenol-lyase (460 aa).

An N6-(pyridoxal phosphate)lysine modification is found at Lys-260.

The protein belongs to the beta-eliminating lyase family. As to quaternary structure, homotetramer. Requires pyridoxal 5'-phosphate as cofactor.

It catalyses the reaction L-tyrosine + H2O = phenol + pyruvate + NH4(+). In Fusobacterium nucleatum subsp. nucleatum (strain ATCC 25586 / DSM 15643 / BCRC 10681 / CIP 101130 / JCM 8532 / KCTC 2640 / LMG 13131 / VPI 4355), this protein is Tyrosine phenol-lyase.